The following is a 410-amino-acid chain: MAASNQSEVNIGMVGHVDHGKTSLTRKLTGVWTDTHSEELKRGISIRLGYADCEIKKCETCDEPECYTVGKKCDSCGGKLQTLRKISFVDAPGHETLMATMLSGASLMDGAILVIAASEECPQPQTKEHLMALDALGVEKIIIVQNKIDLVSEEAAVENYNQIKEFTKGTVAENAPIIPVSAHHGANLDVLLKAIQDFIPTPERDETVSPKLYVARSFDVNKPGSEIKDLKGGVIGGSIIQGALKVGDELEIKPGIKVTEGNKTHWVPIITKIISLGVGSKKLKTAYPGGLIGVGTELDPNLTKSDALSGSLAGIPGTLPETLEKMEIEPQLLERVVGSQDELVIEPLKTNEVLMLNVGTSTTVGVTVSARPDRAEIKLKLPVCADKGDRVAISRKIGSRWRLIGYGIIL.

In terms of domain architecture, tr-type G spans 6-203; sequence QSEVNIGMVG…AIQDFIPTPE (198 aa). The interval 15-22 is G1; the sequence is GHVDHGKT. Mg(2+)-binding residues include Asp-18, Thr-22, Gly-43, and Ser-45. A GTP-binding site is contributed by 18 to 23; it reads DHGKTS. The interval 43–47 is G2; that stretch reads GISIR. Positions 58, 61, 73, and 76 each coordinate Zn(2+). Positions 90-93 are G3; that stretch reads DAPG. GTP contacts are provided by residues 146 to 149 and 181 to 183; these read NKID and SAH. A G4 region spans residues 146–149; sequence NKID. The segment at 181–183 is G5; it reads SAH.

Belongs to the TRAFAC class translation factor GTPase superfamily. Classic translation factor GTPase family. EIF2G subfamily. Heterotrimer composed of an alpha, a beta and a gamma chain. It depends on Mg(2+) as a cofactor.

It catalyses the reaction GTP + H2O = GDP + phosphate + H(+). Its function is as follows. eIF-2 functions in the early steps of protein synthesis by forming a ternary complex with GTP and initiator tRNA. This is Translation initiation factor 2 subunit gamma from Methanococcus maripaludis (strain DSM 14266 / JCM 13030 / NBRC 101832 / S2 / LL).